A 232-amino-acid chain; its full sequence is Sugar fermentation stimulation protein homolog (232 aa).

Belongs to the SfsA family.

This chain is Sugar fermentation stimulation protein homolog, found in Pyrobaculum arsenaticum (strain DSM 13514 / JCM 11321 / PZ6).